The chain runs to 188 residues: dCTP deaminase (188 aa).

Residues 111–116, 135–137, Gln156, Tyr170, and Gln180 contribute to the dCTP site; these read KSTYAR and TLE. Residue Glu137 is the Proton donor/acceptor of the active site.

Belongs to the dCTP deaminase family. In terms of assembly, homotrimer.

The enzyme catalyses dCTP + H2O + H(+) = dUTP + NH4(+). It functions in the pathway pyrimidine metabolism; dUMP biosynthesis; dUMP from dCTP (dUTP route): step 1/2. Functionally, catalyzes the deamination of dCTP to dUTP. In Pseudomonas savastanoi pv. phaseolicola (strain 1448A / Race 6) (Pseudomonas syringae pv. phaseolicola (strain 1448A / Race 6)), this protein is dCTP deaminase.